The chain runs to 905 residues: Clumping factor B (905 aa).

A signal peptide spans 1 to 44; that stretch reads MKKRIDYLSNKQNKYSIRRFTVGTTSVIVGATILFGIGNHQAQA. The short motif at 15-26 is the YSIRK-G/S signaling motif element; sequence YSIRRFTVGTTS. 2 stretches are compositionally biased toward polar residues: residues 44–61 and 68–101; these read ASEQ…NASA and MIET…KPMS. The tract at residues 44 to 191 is disordered; that stretch reads ASEQSNDTTQ…AQGTSKPSVR (148 aa). The segment at 45–542 is ligand binding A region; that stretch reads SEQSNDTTQS…GSADGDSAVN (498 aa). The segment covering 102-119 has biased composition (low complexity); the sequence is TQTSNTTTTEPASTNETP. The segment covering 134-189 has biased composition (polar residues); sequence QDQTVPQEANSQVDNKTTNDANSIATNSELKNPQTLDLPQSSPQTISNAQGTSKPS. The MIDAS-like motif motif lies at 272–276; that stretch reads DYSNS. Positions 530-877 are disordered; it reads YGGGSADGDS…ETGDKSENTN (348 aa). The segment covering 545–555 has biased composition (pro residues); that stretch reads DPTPGPPVDPE. Acidic residues predominate over residues 556–829; sequence PSPDPEPEPS…SDSDSDSDSD (274 aa). The span at 833–844 shows a compositional bias: polar residues; the sequence is RVTPPNNEQKAP. Over residues 861-874 the composition is skewed to basic and acidic residues; that stretch reads HKTDALPETGDKSE. The short motif at 866-870 is the LPXTG sorting signal element; the sequence is LPETG. The residue at position 869 (Thr-869) is a Pentaglycyl murein peptidoglycan amidated threonine. A propeptide spans 870-905 (removed by sortase); that stretch reads GDKSENTNATLFGAMMALLGSLLLFRKRKQDHKEKA.

Belongs to the serine-aspartate repeat-containing protein (SDr) family. In terms of processing, proteolytically cleaved by aureolysin (aur). This cleavage leads to the inactivation of ClfB.

It is found in the secreted. The protein localises to the cell wall. Its function is as follows. Cell surface-associated protein implicated in virulence by promoting bacterial attachment to both alpha- and beta-chains of human fibrinogen and inducing the formation of bacterial clumps. This chain is Clumping factor B (clfB), found in Staphylococcus aureus (strain MSSA476).